Here is a 283-residue protein sequence, read N- to C-terminus: Phosphatidylserine decarboxylase proenzyme (283 aa).

Catalysis depends on charge relay system; for autoendoproteolytic cleavage activity residues Asp-89, His-146, and Ser-249. The Schiff-base intermediate with substrate; via pyruvic acid; for decarboxylase activity role is filled by Ser-249. At Ser-249 the chain carries Pyruvic acid (Ser); by autocatalysis.

The protein belongs to the phosphatidylserine decarboxylase family. PSD-B subfamily. Prokaryotic type I sub-subfamily. In terms of assembly, heterodimer of a large membrane-associated beta subunit and a small pyruvoyl-containing alpha subunit. Pyruvate is required as a cofactor. Post-translationally, is synthesized initially as an inactive proenzyme. Formation of the active enzyme involves a self-maturation process in which the active site pyruvoyl group is generated from an internal serine residue via an autocatalytic post-translational modification. Two non-identical subunits are generated from the proenzyme in this reaction, and the pyruvate is formed at the N-terminus of the alpha chain, which is derived from the carboxyl end of the proenzyme. The autoendoproteolytic cleavage occurs by a canonical serine protease mechanism, in which the side chain hydroxyl group of the serine supplies its oxygen atom to form the C-terminus of the beta chain, while the remainder of the serine residue undergoes an oxidative deamination to produce ammonia and the pyruvoyl prosthetic group on the alpha chain. During this reaction, the Ser that is part of the protease active site of the proenzyme becomes the pyruvoyl prosthetic group, which constitutes an essential element of the active site of the mature decarboxylase.

Its subcellular location is the cell membrane. It catalyses the reaction a 1,2-diacyl-sn-glycero-3-phospho-L-serine + H(+) = a 1,2-diacyl-sn-glycero-3-phosphoethanolamine + CO2. It functions in the pathway phospholipid metabolism; phosphatidylethanolamine biosynthesis; phosphatidylethanolamine from CDP-diacylglycerol: step 2/2. Functionally, catalyzes the formation of phosphatidylethanolamine (PtdEtn) from phosphatidylserine (PtdSer). This Legionella pneumophila (strain Lens) protein is Phosphatidylserine decarboxylase proenzyme.